Reading from the N-terminus, the 478-residue chain is Patatin-like phospholipase domain-containing protein 2 (478 aa).

Over 1–8 (MFPRETKW) the chain is Cytoplasmic. A helical membrane pass occupies residues 9-29 (NISFAGCGFLGVYHIGVASCL). One can recognise a PNPLA domain in the interval 10–179 (ISFAGCGFLG…SDNLPLYELK (170 aa)). The short motif at 14–19 (GCGFLG) is the GXGXXG element. The Extracellular segment spans residues 30–42 (REHAPFLVANATH). Asparagine 39 carries an N-linked (GlcNAc...) asparagine glycan. The chain crosses the membrane as a helical span at residues 43 to 63 (IYGASAGALTATALVTGACLG). Positions 45-49 (GASAG) match the GXSXG motif. The active-site Nucleophile is the serine 47. Topologically, residues 64–137 (EAGANIIEVS…IISHFSSKDE (74 aa)) are cytoplasmic. A Glycyl lysine isopeptide (Lys-Gly) (interchain with G-Cter in ubiquitin) cross-link involves residue lysine 92. Residues 138-158 (LIQANVCSTFIPVYCGLIPPT) traverse the membrane as a helical segment. The Extracellular portion of the chain corresponds to 159–323 (LQGVRYVDGG…TTLSNMLPVR (165 aa)). The active-site Proton acceptor is the aspartate 166. Positions 166 to 168 (DGG) match the DGA/G motif. Residues 324–344 (LATAMMVPYTLPLESAVSFTI) traverse the membrane as a helical segment. Topologically, residues 345-478 (RLLEWLPDVP…PQDPSGLPPC (134 aa)) are cytoplasmic. Position 366 is a phosphoserine; in vitro (serine 366). Serine 388 is subject to Phosphoserine; by PKA. A phosphoserine mark is found at serine 398 and serine 422. The interval 456 to 478 (RAPASPTATDPATPQDPSGLPPC) is disordered. A compositionally biased stretch (low complexity) spans 457–478 (APASPTATDPATPQDPSGLPPC). Position 460 is a phosphoserine; in vitro (serine 460).

In terms of assembly, interacts with ABHD5; this association stimulates PNPLA2 triglyceride hydrolase activity. Interacts with SERPINF1; this interaction stimulates the phospholipase A2 activity of PNPLA2. Despite a colocalization in lipid droplets, it probably does not interact with PLIN. Interacts with PLIN5; prevents interaction with ABHD5. Interacts with FAF2. Phosphorylation at Ser-398 by PKA is increased during fasting and moderate intensity exercise, and moderately increases lipolytic activity. In terms of processing, ubiquitinated by PEX2 in response to reactive oxygen species (ROS), leading to its degradation. Ubiquitination is stimulated by LDAH.

It is found in the lipid droplet. It localises to the cell membrane. Its subcellular location is the cytoplasm. The catalysed reaction is a triacylglycerol + H2O = a diacylglycerol + a fatty acid + H(+). The enzyme catalyses a triacylglycerol + H2O = a 1,2-diacylglycerol + a fatty acid + H(+). It carries out the reaction a triacylglycerol + H2O = a 1,3-diacylglycerol + a fatty acid + H(+). It catalyses the reaction a triacyl-sn-glycerol + H2O = a 1,3-diacyl-sn-glycerol + a fatty acid + H(+). The catalysed reaction is a triacyl-sn-glycerol + H2O = a 2,3-diacyl-sn-glycerol + a fatty acid + H(+). The enzyme catalyses a 1-acylglycerol + a 1,3-diacylglycerol = a triacylglycerol + glycerol. It carries out the reaction a 1-acylglycerol + a 1,2-diacylglycerol = a triacylglycerol + glycerol. It catalyses the reaction 2 a 1-acylglycerol = a 1,2-diacylglycerol + glycerol. The catalysed reaction is a triacylglycerol + all-trans-retinol = an all-trans-retinyl ester + a diacylglycerol. The enzyme catalyses 1,2-di-(9Z-octadecenoyl)-glycerol + (9Z)-octadecenoate + H(+) = 1,2,3-tri-(9Z-octadecenoyl)-glycerol + H2O. It carries out the reaction 1,2,3-tri-(9Z-octadecenoyl)-glycerol + H2O = 1,3-di-(9Z-octadecenoyl)-glycerol + (9Z)-octadecenoate + H(+). It catalyses the reaction 1-(9Z-octadecenoyl)-glycerol + 1,3-di-(9Z-octadecenoyl)-glycerol = 1,2,3-tri-(9Z-octadecenoyl)-glycerol + glycerol. The catalysed reaction is 1-(9Z-octadecenoyl)-glycerol + 1,2-di-(9Z-octadecenoyl)-glycerol = 1,2,3-tri-(9Z-octadecenoyl)-glycerol + glycerol. The enzyme catalyses 2 1-(9Z-octadecenoyl)-glycerol = 1,2-di-(9Z-octadecenoyl)-glycerol + glycerol. It carries out the reaction 1,2,3-tri-(9Z-octadecenoyl)-glycerol + all-trans-retinol = all-trans-retinyl 9Z-octadecenoate + di-(9Z)-octadecenoylglycerol. It catalyses the reaction 1,2,3-tri-(9Z)-hexadecenoylglycerol + H2O = 1,3-di-(9Z)-hexadecenoylglycerol + (9Z)-hexadecenoate + H(+). The catalysed reaction is 1,2,3-tri-(9Z,12Z)-octadecadienoylglycerol + H2O = 1,3-di-(9Z,12Z)-octadecadienoylglycerol + (9Z,12Z)-octadecadienoate + H(+). The enzyme catalyses 1,2,3-tri-(9Z,12Z,15Z)-octadecatrienoylglycerol + H2O = 1,3-di-(9Z,12Z,15Z)-octadecatrienoylglycerol + (9Z,12Z,15Z)-octadecatrienoate + H(+). It carries out the reaction 1,3-di-(9Z)-octadecenoyl-2-hexadecanoylglycerol + H2O = 1,3-di-(9Z-octadecenoyl)-glycerol + hexadecanoate + H(+). It catalyses the reaction 1,2-di-(9Z)-octadecenoyl-3-hexadecanoyl-sn-glycerol + H2O = 1-(9Z)-octadecenoyl-3-hexadecanoyl-sn-glycerol + (9Z)-octadecenoate + H(+). The catalysed reaction is 1-hexadecanoyl-2,3-di-(9Z)-octadecenoyl-sn-glycerol + H2O = 1-hexadecanoyl-3-(9Z)-octadecenoyl-sn-glycerol + (9Z)-octadecenoate + H(+). The enzyme catalyses 1,2,3-tri-(9Z-octadecenoyl)-glycerol + H2O = 2,3-di-(9Z)-octadecenoyl-sn-glycerol + (9Z)-octadecenoate + H(+). It carries out the reaction 1,2,3-tri-(9Z)-hexadecenoylglycerol + H2O = 2,3-di-(9Z)-hexadecenoyl-sn-glycerol + (9Z)-hexadecenoate + H(+). It catalyses the reaction 1,2,3-tri-(9Z,12Z)-octadecadienoylglycerol + H2O = 2,3-di-(9Z,12Z)-octadecadienoyl-sn-glycerol + (9Z,12Z)-octadecadienoate + H(+). The catalysed reaction is 1,2,3-tri-(9Z,12Z,15Z)-octadecatrienoylglycerol + H2O = 2,3-di-(9Z,12Z,15Z)-octadecatrienoyl-sn-glycerol + (9Z,12Z,15Z)-octadecatrienoate + H(+). The enzyme catalyses 1,3-di-(9Z)-octadecenoyl-2-hexadecanoylglycerol + H2O = 2-hexadecanoyl-3-(9Z)-octadecenoyl-sn-glycerol + (9Z)-octadecenoate + H(+). It carries out the reaction 1-hexadecanoyl-2,3-di-(9Z)-octadecenoyl-sn-glycerol + H2O = 2,3-di-(9Z)-octadecenoyl-sn-glycerol + hexadecanoate + H(+). It catalyses the reaction 1,2-di-(9Z)-octadecenoyl-3-hexadecanoyl-sn-glycerol + H2O = 2-(9Z-octadecenoyl)-3-hexadecanoyl-sn-glycerol + (9Z)-octadecenoate + H(+). The catalysed reaction is a 1,2-diacyl-sn-glycero-3-phosphocholine + H2O = a 1-acyl-sn-glycero-3-phosphocholine + a fatty acid + H(+). The enzyme catalyses 1,2,3-tri-(9Z-octadecenoyl)-glycerol + 9-hydroxy-octadecanoate = 9-(9Z-octadecenoyloxy)-octadecanoate + 2,3-di-(9Z)-octadecenoyl-sn-glycerol. It carries out the reaction 1-hexadecanoyl-2,3-di-(9Z)-octadecenoyl-sn-glycerol + 9-hydroxy-octadecanoate = 9-hexadecanoyloxy-octadecanoate + 2,3-di-(9Z)-octadecenoyl-sn-glycerol. It catalyses the reaction 1,2,3-tri-(10Z)-heptadecenoylglycerol + 9-hydroxy-octadecanoate = 2,3-di-(10Z-heptadecenoyl)-sn-glycerol + 9-(10Z-heptadecenoyloxy)-octadecanoate. The catalysed reaction is 1,2,3-tri-(9Z,12Z)-octadecadienoylglycerol + 9-hydroxy-octadecanoate = 2,3-di-(9Z,12Z)-octadecadienoyl-sn-glycerol + 9-(9Z,12Z-octadecadienoyloxy)-octadecanoate. The enzyme catalyses 1,2,3-tri-(9Z)-hexadecenoylglycerol + 9-hydroxy-octadecanoate = 2,3-di-(9Z)-hexadecenoyl-sn-glycerol + 9-(9Z-hexadecenoyloxy)-octadecanoate. It carries out the reaction 9-hydroxy-octadecanoate + 1,2-di-(9Z-octadecenoyl)-sn-glycerol = 9-(9Z-octadecenoyloxy)-octadecanoate + 2-(9Z-octadecenoyl)-glycerol. It catalyses the reaction 1-hexadecanoyl-2,3-di-(9Z)-octadecenoyl-sn-glycerol + 9-hydroxy-octadecanoate = 1-hexadecanoyl-3-(9Z)-octadecenoyl-sn-glycerol + 9-(9Z-octadecenoyloxy)-octadecanoate. Its pathway is glycerolipid metabolism; triacylglycerol degradation. Its function is as follows. Catalyzes the initial step in triglyceride hydrolysis in adipocyte and non-adipocyte lipid droplets. Exhibits a strong preference for the hydrolysis of long-chain fatty acid esters at the sn-2 position of the glycerol backbone and acts coordinately with LIPE/HLS and DGAT2 within the lipolytic cascade. Also possesses acylglycerol transacylase and phospholipase A2 activities. Transfers fatty acid from triglyceride to retinol, hydrolyzes retinylesters, and generates 1,3-diacylglycerol from triglycerides. Regulates adiposome size and may be involved in the degradation of adiposomes. Catalyzes the formation of an ester bond between hydroxy fatty acids and fatty acids derived from triglycerides or diglycerides to generate fatty acid esters of hydroxy fatty acids (FAHFAs) in adipocytes. Acts antagonistically with LDAH in regulation of cellular lipid stores. Inhibits LDAH-stimulated lipid droplet fusion. May play an important role in energy homeostasis. May play a role in the response of the organism to starvation, enhancing hydrolysis of triglycerides and providing free fatty acids to other tissues to be oxidized in situations of energy depletion. The sequence is that of Patatin-like phospholipase domain-containing protein 2 from Rattus norvegicus (Rat).